A 500-amino-acid chain; its full sequence is Allene oxide synthase 3 (500 aa).

Residues 1 to 26 are disordered; the sequence is MAPPPVNSGDAAAAATGEKSKLSPSG. Residues 297–298, Lys304, and 365–368 each bind substrate; these read FN and PVEF. Cys452 serves as a coordination point for heme.

Belongs to the cytochrome P450 family. It depends on heme as a cofactor. In terms of tissue distribution, not expressed in dark-grown seedlings.

It catalyses the reaction (13S)-hydroperoxy-(9Z,11E,15Z)-octadecatrienoate = (9Z,13S,15Z)-12,13-epoxyoctadeca-9,11,15-trienoate + H2O. It functions in the pathway lipid metabolism; oxylipin biosynthesis. Involved in the biosynthesis of jasmonic acid, a growth regulator that is implicated also as a signaling molecule in plant defense. Converts 13-hydroperoxylinolenic acid to 12,13-epoxylinolenic acid. The chain is Allene oxide synthase 3 (CYP74A3) from Oryza sativa subsp. japonica (Rice).